Consider the following 121-residue polypeptide: UPF0231 protein ESA_03214 (121 aa).

This sequence belongs to the UPF0231 family.

The polypeptide is UPF0231 protein ESA_03214 (Cronobacter sakazakii (strain ATCC BAA-894) (Enterobacter sakazakii)).